Here is a 408-residue protein sequence, read N- to C-terminus: Elongation factor Tu, chloroplastic (408 aa).

The tr-type G domain occupies 10–214; that stretch reads KPHVNIGTIG…AVDSYIPTPK (205 aa). Residues 19–26 are G1; that stretch reads GHVDHGKT. A GTP-binding site is contributed by 19–26; sequence GHVDHGKT. Residue Thr-26 participates in Mg(2+) binding. The G2 stretch occupies residues 60 to 64; sequence GITIN. Residues 81–84 are G3; the sequence is DCPG. Residues 81–85 and 136–139 contribute to the GTP site; these read DCPGH and NKED. The tract at residues 136–139 is G4; it reads NKED. A G5 region spans residues 174 to 176; it reads SAL.

This sequence belongs to the TRAFAC class translation factor GTPase superfamily. Classic translation factor GTPase family. EF-Tu/EF-1A subfamily.

The protein localises to the plastid. Its subcellular location is the chloroplast. The enzyme catalyses GTP + H2O = GDP + phosphate + H(+). Functionally, GTP hydrolase that promotes the GTP-dependent binding of aminoacyl-tRNA to the A-site of ribosomes during protein biosynthesis. The protein is Elongation factor Tu, chloroplastic (tufA) of Chara connivens (Convergent stonewort).